The chain runs to 139 residues: NADPH-dependent 7-cyano-7-deazaguanine reductase (139 aa).

The Thioimide intermediate role is filled by Cys-34. Asp-41 functions as the Proton donor in the catalytic mechanism. Residues 56 to 58 and 75 to 76 contribute to the substrate site; these read VEL and HE.

The protein belongs to the GTP cyclohydrolase I family. QueF type 1 subfamily.

The protein localises to the cytoplasm. It catalyses the reaction 7-aminomethyl-7-carbaguanine + 2 NADP(+) = 7-cyano-7-deazaguanine + 2 NADPH + 3 H(+). Its pathway is tRNA modification; tRNA-queuosine biosynthesis. In terms of biological role, catalyzes the NADPH-dependent reduction of 7-cyano-7-deazaguanine (preQ0) to 7-aminomethyl-7-deazaguanine (preQ1). The sequence is that of NADPH-dependent 7-cyano-7-deazaguanine reductase from Thiobacillus denitrificans (strain ATCC 25259 / T1).